The following is a 222-amino-acid chain: Superoxide dismutase [Cu-Zn], chloroplastic (222 aa).

The transit peptide at 1–68 (MAAHTILASA…AASKPLTIVA (68 aa)) directs the protein to the chloroplast. Cu cation contacts are provided by His114, His116, and His131. A disulfide bond links Cys125 and Cys214. His131, His139, His148, and Asp151 together coordinate Zn(2+). His188 contacts Cu cation.

It belongs to the Cu-Zn superoxide dismutase family. In terms of assembly, homotetramer. It depends on Cu cation as a cofactor. Zn(2+) is required as a cofactor.

Its subcellular location is the plastid. The protein localises to the chloroplast. It carries out the reaction 2 superoxide + 2 H(+) = H2O2 + O2. Destroys radicals which are normally produced within the cells and which are toxic to biological systems. The protein is Superoxide dismutase [Cu-Zn], chloroplastic (SODCP) of Spinacia oleracea (Spinach).